The chain runs to 156 residues: Endoribonuclease YbeY (156 aa).

Zn(2+)-binding residues include histidine 119, histidine 123, and histidine 129.

Belongs to the endoribonuclease YbeY family. The cofactor is Zn(2+).

Its subcellular location is the cytoplasm. In terms of biological role, single strand-specific metallo-endoribonuclease involved in late-stage 70S ribosome quality control and in maturation of the 3' terminus of the 16S rRNA. This chain is Endoribonuclease YbeY, found in Buchnera aphidicola subsp. Cinara cedri (strain Cc).